Consider the following 467-residue polypeptide: Glutamate--tRNA ligase (467 aa).

Positions 15 to 25 (PSPTGYLHVGG) match the 'HIGH' region motif. A 'KMSKS' region motif is present at residues 249–253 (KLSKR). K252 serves as a coordination point for ATP.

Belongs to the class-I aminoacyl-tRNA synthetase family. Glutamate--tRNA ligase type 1 subfamily. Monomer.

Its subcellular location is the cytoplasm. The enzyme catalyses tRNA(Glu) + L-glutamate + ATP = L-glutamyl-tRNA(Glu) + AMP + diphosphate. Its function is as follows. Catalyzes the attachment of glutamate to tRNA(Glu) in a two-step reaction: glutamate is first activated by ATP to form Glu-AMP and then transferred to the acceptor end of tRNA(Glu). This Coprothermobacter proteolyticus (strain ATCC 35245 / DSM 5265 / OCM 4 / BT) protein is Glutamate--tRNA ligase.